A 911-amino-acid chain; its full sequence is Translation initiation factor IF-2 (911 aa).

2 stretches are compositionally biased toward basic and acidic residues: residues L80–L94 and R101–V113. Disordered regions lie at residues L80–P142, V153–G172, and S195–K309. A compositionally biased stretch (basic and acidic residues) spans K214–T256. Positions A262–K272 are enriched in basic residues. Over residues P273–I284 the composition is skewed to basic and acidic residues. Low complexity predominate over residues S286 to S300. The tr-type G domain maps to I408 to K578. Residues G417–T424 form a G1 region. GTP is bound at residue G417–T424. The G2 stretch occupies residues G442–H446. Residues D464–G467 form a G3 region. Residues D464 to H468 and N518 to D521 contribute to the GTP site. Positions N518 to D521 are G4. The G5 stretch occupies residues S554 to K556.

The protein belongs to the TRAFAC class translation factor GTPase superfamily. Classic translation factor GTPase family. IF-2 subfamily.

The protein resides in the cytoplasm. One of the essential components for the initiation of protein synthesis. Protects formylmethionyl-tRNA from spontaneous hydrolysis and promotes its binding to the 30S ribosomal subunits. Also involved in the hydrolysis of GTP during the formation of the 70S ribosomal complex. The protein is Translation initiation factor IF-2 of Chlorobium phaeobacteroides (strain BS1).